The sequence spans 338 residues: GTP 3',8-cyclase (338 aa).

In terms of domain architecture, Radical SAM core spans Lys8 to Glu227. Arg17 provides a ligand contact to GTP. Positions 24 and 28 each coordinate [4Fe-4S] cluster. Residue Tyr30 participates in S-adenosyl-L-methionine binding. Cys31 provides a ligand contact to [4Fe-4S] cluster. Residue Arg71 coordinates GTP. Gly75 provides a ligand contact to S-adenosyl-L-methionine. Thr102 is a binding site for GTP. Residue Ser126 coordinates S-adenosyl-L-methionine. A GTP-binding site is contributed by Lys163. Met197 is an S-adenosyl-L-methionine binding site. Residues Cys261 and Cys264 each contribute to the [4Fe-4S] cluster site. Arg266–Arg268 is a GTP binding site. Cys278 provides a ligand contact to [4Fe-4S] cluster.

The protein belongs to the radical SAM superfamily. MoaA family. As to quaternary structure, monomer and homodimer. [4Fe-4S] cluster serves as cofactor.

It catalyses the reaction GTP + AH2 + S-adenosyl-L-methionine = (8S)-3',8-cyclo-7,8-dihydroguanosine 5'-triphosphate + 5'-deoxyadenosine + L-methionine + A + H(+). It participates in cofactor biosynthesis; molybdopterin biosynthesis. Catalyzes the cyclization of GTP to (8S)-3',8-cyclo-7,8-dihydroguanosine 5'-triphosphate. The chain is GTP 3',8-cyclase from Bacillus anthracis (strain CDC 684 / NRRL 3495).